The chain runs to 235 residues: PRA1 family protein 1 (235 aa).

The segment covering 1-17 (MESNSNSNETMYGNPNI) has biased composition (polar residues). A disordered region spans residues 1–55 (MESNSNSNETMYGNPNINMGFVDSGNSNIGNNTGSMSPPPQQQQQPQQASSTPAG). Low complexity predominate over residues 24 to 48 (SGNSNIGNNTGSMSPPPQQQQQPQQ). Helical transmembrane passes span 144 to 164 (SVFF…LLFI) and 187 to 207 (AFLS…LVGA).

Belongs to the PRA1 family.

It is found in the membrane. Functionally, may act as a general Rab protein regulator. This Dictyostelium discoideum (Social amoeba) protein is PRA1 family protein 1 (prafA).